The following is a 422-amino-acid chain: ATP-dependent RNA helicase RhlB (422 aa).

Positions 9 to 37 (QKFSDFALHPLVIKAIENQGFYHCTPIQA) match the Q motif motif. The 180-residue stretch at 40–219 (FPITLAGRDV…FEQMNHPEYI (180 aa)) folds into the Helicase ATP-binding domain. Residue 53–60 (AQTGTGKT) participates in ATP binding. Positions 165-168 (DEAD) match the DEAD box motif. Residues 245 to 390 (RLLQTLIEEE…TSEYNKEALL (146 aa)) form the Helicase C-terminal domain. Residues 394-422 (PQPKRLQRHHRHYAGSRNQGASRKPRSPQ) form a disordered region. Residues 398 to 407 (RLQRHHRHYA) show a composition bias toward basic residues.

Belongs to the DEAD box helicase family. RhlB subfamily. Component of the RNA degradosome, which is a multiprotein complex involved in RNA processing and mRNA degradation.

The protein localises to the cytoplasm. It catalyses the reaction ATP + H2O = ADP + phosphate + H(+). DEAD-box RNA helicase involved in RNA degradation. Has RNA-dependent ATPase activity and unwinds double-stranded RNA. The protein is ATP-dependent RNA helicase RhlB of Hamiltonella defensa subsp. Acyrthosiphon pisum (strain 5AT).